Consider the following 376-residue polypeptide: Growth/differentiation factor 8 (376 aa).

Positions 1–22 (MHLSQIVLYLSLLIALGPVVLS) are cleaved as a signal peptide. Residues 23-267 (DQEAHQQPSV…ISEGPRRARR (245 aa)) constitute a propeptide that is removed on maturation. Intrachain disulfides connect Cys-273/Cys-283, Cys-282/Cys-341, Cys-310/Cys-373, and Cys-314/Cys-375.

It belongs to the TGF-beta family. In terms of assembly, homodimer; disulfide-linked. In terms of tissue distribution, highly expressed in muscle. Also expressed in other tissues such as eye, gill, ovary, gut and brain. Very low level detected in testis. Not expressed in liver, kidney, stomach or heart.

The protein localises to the secreted. In terms of biological role, acts specifically as a negative regulator of skeletal muscle growth. The chain is Growth/differentiation factor 8 from Oreochromis mossambicus (Mozambique tilapia).